The following is a 287-amino-acid chain: Nucleotide-binding protein Sfri_3380 (287 aa).

8–15 (GRSGSGKS) contributes to the ATP binding site. 56–59 (DVRN) serves as a coordination point for GTP.

The protein belongs to the RapZ-like family.

Functionally, displays ATPase and GTPase activities. The protein is Nucleotide-binding protein Sfri_3380 of Shewanella frigidimarina (strain NCIMB 400).